The chain runs to 253 residues: Small ribosomal subunit protein cS22 (253 aa).

The N-terminal 56 residues, Met1–Tyr56, are a transit peptide targeting the chloroplast. RRM domains lie at Arg76–Lys154 and Tyr177–Ala253.

The protein belongs to the chloroplast-specific ribosomal protein cS22 family. In terms of assembly, component of the chloroplast small ribosomal subunit (SSU). Mature 70S chloroplast ribosomes of higher plants consist of a small (30S) and a large (50S) subunit. The 30S small subunit contains 1 molecule of ribosomal RNA (16S rRNA) and 24 different proteins. The 50S large subunit contains 3 rRNA molecules (23S, 5S and 4.5S rRNA) and 33 different proteins. Expressed constitutively in roots, stems, flower buds, flowers and leaves.

The protein localises to the plastid. The protein resides in the chloroplast. In terms of biological role, component of the chloroplast ribosome (chloro-ribosome), a dedicated translation machinery responsible for the synthesis of chloroplast genome-encoded proteins, including proteins of the transcription and translation machinery and components of the photosynthetic apparatus. May have a role in the recruitment of stored chloroplast mRNAs for active protein synthesis. Bind single strand DNA (ssDNA) and RNA in vitro. Exhibits RNA chaperone activity. Negatively regulates resistance responses to abiotic stresses during seed germination (e.g. salt, dehydration, and low temperature) and seedling growth (e.g. salt). The protein is Small ribosomal subunit protein cS22 of Arabidopsis thaliana (Mouse-ear cress).